A 223-amino-acid polypeptide reads, in one-letter code: ATP synthase subunit a 1 (223 aa).

Helical transmembrane passes span 20–40, 78–98, 108–128, 174–194, and 196–216; these read LTIA…AFAS, YLPY…CTII, LSTT…FGIA, MILA…MSVL, and LLTG…YISA.

Belongs to the ATPase A chain family. F-type ATPases have 2 components, CF(1) - the catalytic core - and CF(0) - the membrane proton channel. CF(1) has five subunits: alpha(3), beta(3), gamma(1), delta(1), epsilon(1). CF(0) has four main subunits: a, b, b' and c.

It is found in the cell inner membrane. Functionally, key component of the proton channel; it plays a direct role in the translocation of protons across the membrane. This is ATP synthase subunit a 1 from Chlorobium luteolum (strain DSM 273 / BCRC 81028 / 2530) (Pelodictyon luteolum).